A 434-amino-acid chain; its full sequence is Nicotinate phosphoribosyltransferase (434 aa).

The residue at position 242 (His242) is a Phosphohistidine; by autocatalysis.

It belongs to the NAPRTase family. Transiently phosphorylated on a His residue during the reaction cycle. Phosphorylation strongly increases the affinity for substrates and increases the rate of nicotinate D-ribonucleotide production. Dephosphorylation regenerates the low-affinity form of the enzyme, leading to product release.

It carries out the reaction nicotinate + 5-phospho-alpha-D-ribose 1-diphosphate + ATP + H2O = nicotinate beta-D-ribonucleotide + ADP + phosphate + diphosphate. The protein operates within cofactor biosynthesis; NAD(+) biosynthesis; nicotinate D-ribonucleotide from nicotinate: step 1/1. Catalyzes the synthesis of beta-nicotinate D-ribonucleotide from nicotinate and 5-phospho-D-ribose 1-phosphate at the expense of ATP. This chain is Nicotinate phosphoribosyltransferase, found in Allorhizobium ampelinum (strain ATCC BAA-846 / DSM 112012 / S4) (Agrobacterium vitis (strain S4)).